Reading from the N-terminus, the 863-residue chain is Paramyosin (863 aa).

The nonhelical region stretch occupies residues 1 to 26 (MSESHVKISRTIIRGTSPSTVRLESP). The stretch at 27-836 (VRELEDLLDL…ERTITIKRTI (810 aa)) forms a coiled coil. The tract at residues 837 to 863 (GGPGSRAVSVVREINSVSRGNRATSIM) is nonhelical region.

The protein belongs to the paramyosin family. As to quaternary structure, homodimer.

The protein localises to the cytoplasm. It is found in the myofibril. Functionally, paramyosin is a major structural component of many thick filaments isolated from invertebrate muscles. This chain is Paramyosin, found in Echinococcus granulosus (Hydatid tapeworm).